A 58-amino-acid polypeptide reads, in one-letter code: Small ribosomal subunit protein bS21 (58 aa).

Over residues 32–42 (ARRREHYEKPS) the composition is skewed to basic and acidic residues. The interval 32–58 (ARRREHYEKPSVRRKKKSEAARKRRWH) is disordered. Positions 43–58 (VRRKKKSEAARKRRWH) are enriched in basic residues.

The protein belongs to the bacterial ribosomal protein bS21 family.

This is Small ribosomal subunit protein bS21 from Moorella thermoacetica (strain ATCC 39073 / JCM 9320).